The primary structure comprises 54 residues: Small, acid-soluble spore protein gamma-type (54 aa).

A disordered region spans residues 1–54 (MAKKNRNKQQQEMQQQQQQHQAEFANEFAEGSSAEQARQQQQKAAGKRQKKNQQ). Low complexity-rich tracts occupy residues 10-21 (QQEMQQQQQQHQ) and 29-44 (AEGS…QQKA). Over residues 45–54 (AGKRQKKNQQ) the composition is skewed to basic residues.

It belongs to the gamma-type SASP family.

Functionally, SASP are proteins degraded in the first minutes of spore germination and provide amino acids for both new protein synthesis and metabolism. These proteins may be involved in dormant spore's high resistance to UV light. The sequence is that of Small, acid-soluble spore protein gamma-type (sspA) from Alkalihalophilus pseudofirmus (strain ATCC BAA-2126 / JCM 17055 / OF4) (Bacillus pseudofirmus).